A 353-amino-acid chain; its full sequence is tRNA-specific 2-thiouridylase MnmA 2 (353 aa).

ATP is bound at residue 6-13 (LLSGGVDS). The segment at 92–94 (NPD) is interaction with target base in tRNA. The Nucleophile role is filled by cysteine 97. The cysteines at positions 97 and 192 are disulfide-linked. Glycine 120 contacts ATP. The interval 142-144 (KDQ) is interaction with tRNA. The active-site Cysteine persulfide intermediate is the cysteine 192.

It belongs to the MnmA/TRMU family.

It localises to the cytoplasm. The catalysed reaction is S-sulfanyl-L-cysteinyl-[protein] + uridine(34) in tRNA + AH2 + ATP = 2-thiouridine(34) in tRNA + L-cysteinyl-[protein] + A + AMP + diphosphate + H(+). In terms of biological role, catalyzes the 2-thiolation of uridine at the wobble position (U34) of tRNA, leading to the formation of s(2)U34. In Bacteroides fragilis (strain YCH46), this protein is tRNA-specific 2-thiouridylase MnmA 2.